The following is a 490-amino-acid chain: Probable cytosol aminopeptidase (490 aa).

Residues Lys-257 and Asp-262 each contribute to the Mn(2+) site. Residue Lys-269 is part of the active site. The Mn(2+) site is built by Asp-281, Asp-341, and Glu-343. Arg-345 is a catalytic residue.

Belongs to the peptidase M17 family. Requires Mn(2+) as cofactor.

The protein resides in the cytoplasm. The catalysed reaction is Release of an N-terminal amino acid, Xaa-|-Yaa-, in which Xaa is preferably Leu, but may be other amino acids including Pro although not Arg or Lys, and Yaa may be Pro. Amino acid amides and methyl esters are also readily hydrolyzed, but rates on arylamides are exceedingly low.. It carries out the reaction Release of an N-terminal amino acid, preferentially leucine, but not glutamic or aspartic acids.. In terms of biological role, presumably involved in the processing and regular turnover of intracellular proteins. Catalyzes the removal of unsubstituted N-terminal amino acids from various peptides. The protein is Probable cytosol aminopeptidase of Prochlorococcus marinus (strain MIT 9312).